Reading from the N-terminus, the 529-residue chain is MARPPAATAPPPPPPPPPPPPPPIDRLVWLACAAPLSRIPVVGTQVSYFPEGHAEQCPAPLPDPLPSAHRFFLCTITAVDLSADTTTGEPYATISLLPLRHDAPAPAPAPAPAAAELAEAESQEFRYYAKQLTQSDANNGGGFSVPRLCADHIFPALNLDDDPPVQSLTMGDLQGDSWEFRHIYRGTPRRHLLTTGWSKFVNAKQLVAGDTVVFMWCGAPAPERKLLVGVRRAARYSGESACNARGRVQPQEVMEAVRLAAEQAAFRVTYYPRHGAGEFVVPRVEVDKGLTTPWRCGMQVRAQVMEAEDTRRLAWLNGTLTNLRHQQIWRTLEVEWDASAASSSMKNRFVNPWQVQPVDFPPLPMGLKISNNNISAPVCNGDSLLVPPILMHPQPQPPADIQGARHNNGHAYADIPSSSTPSMVRTQQLFPRDLQILVPHTDIVTPQNGSPPDNPVNTPLSASDGMKTIQLFGVTITSPVQGDTNGAFASAQVNQVPEGVDDETATEEASDTSLPDSLTNGHNQDGARL.

Residues 1–22 (MARPPAATAPPPPPPPPPPPPP) form a disordered region. Residues 7-22 (ATAPPPPPPPPPPPPP) are compositionally biased toward pro residues. Positions 128 to 234 (YAKQLTQSDA…KLLVGVRRAA (107 aa)) form a DNA-binding region, TF-B3. Disordered stretches follow at residues 443-462 (IVTPQNGSPPDNPVNTPLSA) and 497-529 (PEGVDDETATEEASDTSLPDSLTNGHNQDGARL). Over residues 444 to 461 (VTPQNGSPPDNPVNTPLS) the composition is skewed to polar residues. Acidic residues predominate over residues 499 to 510 (GVDDETATEEAS). Residues 511 to 523 (DTSLPDSLTNGHN) are compositionally biased toward polar residues.

It belongs to the ARF family. Homo and heterodimers. As to expression, expressed in roots, culms, leaves and young panicles.

Its subcellular location is the nucleus. Auxin response factors (ARFs) are transcriptional factors that bind specifically to the DNA sequence 5'-TGTCTC-3' found in the auxin-responsive promoter elements (AuxREs). This Oryza sativa subsp. japonica (Rice) protein is Auxin response factor 13 (ARF13).